The primary structure comprises 99 residues: Small ribosomal subunit protein bS16 (99 aa).

A disordered region spans residues 80–99 (PPRQQNEAKRETAETAQPEA).

It belongs to the bacterial ribosomal protein bS16 family.

The protein is Small ribosomal subunit protein bS16 of Thermomicrobium roseum (strain ATCC 27502 / DSM 5159 / P-2).